A 328-amino-acid polypeptide reads, in one-letter code: Nitrilase (328 aa).

One can recognise a CN hydrolase domain in the interval 9 to 286 (VRVAAIQAEP…EGILYANVDV (278 aa)). Residue Glu-49 is the Proton acceptor of the active site. Lys-131 is a catalytic residue. Cys-166 serves as the catalytic Nucleophile.

This sequence belongs to the carbon-nitrogen hydrolase superfamily. Nitrilase family.

The catalysed reaction is a nitrile + 2 H2O = a carboxylate + NH4(+). Nitrilase that hydrolyzes preferentially 4-cyanopyridine. Is also able to hydrolyze some aliphatic nitriles, such as (R,S)-mandelonitrile. This chain is Nitrilase, found in Penicillium rubens (strain ATCC 28089 / DSM 1075 / NRRL 1951 / Wisconsin 54-1255) (Penicillium chrysogenum).